The following is a 391-amino-acid chain: S-adenosylmethionine synthase 5 (391 aa).

Residue Glu-9 participates in Mg(2+) binding. His-15 is an ATP binding site. Glu-43 contributes to the K(+) binding site. 2 residues coordinate L-methionine: Glu-56 and Gln-99. ATP is bound by residues 167–169 (DGK), 235–238 (SGRF), Asp-246, 252–253 (RK), Ala-269, Lys-273, and Lys-277. Asp-246 is a binding site for L-methionine. Residue Lys-277 participates in L-methionine binding.

This sequence belongs to the AdoMet synthase family. In terms of assembly, homotetramer. It depends on Mn(2+) as a cofactor. The cofactor is Mg(2+). Co(2+) serves as cofactor. Requires K(+) as cofactor.

Its subcellular location is the cytoplasm. It catalyses the reaction L-methionine + ATP + H2O = S-adenosyl-L-methionine + phosphate + diphosphate. Its pathway is amino-acid biosynthesis; S-adenosyl-L-methionine biosynthesis; S-adenosyl-L-methionine from L-methionine: step 1/1. Catalyzes the formation of S-adenosylmethionine from methionine and ATP. The reaction comprises two steps that are both catalyzed by the same enzyme: formation of S-adenosylmethionine (AdoMet) and triphosphate, and subsequent hydrolysis of the triphosphate. The protein is S-adenosylmethionine synthase 5 (METK5) of Vitis vinifera (Grape).